The sequence spans 397 residues: tRNA (guanine-N(7)-)-methyltransferase non-catalytic subunit wuho (397 aa).

4 WD repeats span residues 75 to 115 (KVEV…AQLL), 163 to 202 (GHLS…DIHS), 206 to 244 (GHKE…ELLL), and 303 to 343 (AGTW…RASG).

Belongs to the WD repeat TRM82 family. Forms a heterodimer with the catalytic subunit Mettl1. Interacts with mei-P26 and weakly interacts with bgcn; required for the function or formation of the mei-P26-bgcn-bam-sxl complex. Interacts with nanos; may be involved in mei-P26-dependent derepression of the BMP signaling pathway. Interacts with Myc; the interaction may be mediated by mei-P26 and may be involved in the regulation of ribosome biogenesis. In terms of tissue distribution, in testis, it is present at high level in hub cells, a niche for germline stem cells of testis. Ubiquitously expressed in all testicular cells throughout spermatogenesis. Ubiquitously expressed in all germline and somatic cells of the ovary.

The protein localises to the nucleus. The protein resides in the cytoplasm. The protein operates within tRNA modification; N(7)-methylguanine-tRNA biosynthesis. Required for the Mettl1-dependent formation of N(7)-methylguanine at position 46 (m7G46) in tRNA. In the Mettl1-wuho methyltransferase complex, it is required to stabilize and induce conformational changes of the catalytic subunit. Required for binding of nanos mRNA and repression of translation by the mei-P26-bgcn-bam-sxl complex. May cooperate with mei-P26 and nanos to derepress the BMP signaling pathway. May cooperate with mei-P26 to suppress expression of a subset of microRNAs. May cooperate with mei-P26 to regulate bam expression levels in germline cells during gametogenesis. Required to promote mitosis to meiosis transition during gametogenesis. May regulate germline cell division in part by regulating ribosome biogenesis. The sequence is that of tRNA (guanine-N(7)-)-methyltransferase non-catalytic subunit wuho from Drosophila persimilis (Fruit fly).